The primary structure comprises 302 residues: NAD kinase 2 (302 aa).

Asp78 (proton acceptor) is an active-site residue. NAD(+) is bound by residues 78-79 (DG), 152-153 (NE), Asp182, 193-198 (TAYSLS), and Ala217.

This sequence belongs to the NAD kinase family. It depends on a divalent metal cation as a cofactor.

The protein resides in the cytoplasm. It carries out the reaction NAD(+) + ATP = ADP + NADP(+) + H(+). Functionally, involved in the regulation of the intracellular balance of NAD and NADP, and is a key enzyme in the biosynthesis of NADP. Catalyzes specifically the phosphorylation on 2'-hydroxyl of the adenosine moiety of NAD to yield NADP. The polypeptide is NAD kinase 2 (Prochlorococcus marinus (strain SARG / CCMP1375 / SS120)).